The following is a 272-amino-acid chain: tRNA pseudouridine synthase B (272 aa).

D38 serves as the catalytic Nucleophile.

The protein belongs to the pseudouridine synthase TruB family. Type 1 subfamily.

The catalysed reaction is uridine(55) in tRNA = pseudouridine(55) in tRNA. Functionally, responsible for synthesis of pseudouridine from uracil-55 in the psi GC loop of transfer RNAs. This Campylobacter jejuni subsp. jejuni serotype O:6 (strain 81116 / NCTC 11828) protein is tRNA pseudouridine synthase B.